Reading from the N-terminus, the 174-residue chain is Cytoglobin-1 (174 aa).

Residues 15 to 165 (SLTEEDVCVI…LYWQMNRVYA (151 aa)) enclose the Globin domain. Histidine 78 and histidine 110 together coordinate heme b.

It belongs to the globin family. As to quaternary structure, monomeric. Expressed in all tissues examined with highest levels in brain, eye, gut and heart.

The protein resides in the cytoplasm. It is found in the nucleus. It catalyses the reaction Fe(II)-heme b-[protein] + nitric oxide + O2 = Fe(III)-heme b-[protein] + nitrate. It carries out the reaction Fe(III)-heme b-[protein] + nitric oxide + H2O = Fe(II)-heme b-[protein] + nitrite + 2 H(+). The catalysed reaction is 2 superoxide + 2 H(+) = H2O2 + O2. The enzyme catalyses H2O2 + AH2 = A + 2 H2O. Probable multifunctional globin with a hexacoordinated heme iron required for the catalysis of various reactions depending on redox condition of the cell as well as oxygen availability. Has a nitric oxide dioxygenase (NOD) activity and is most probably involved in cell-mediated and oxygen-dependent nitric oxide consumption. Under normoxic conditions functions as a nitric oxide dioxygenase (NOD) but under hypoxic conditions the globin may switch its function to that of a nitrite (NO2) reductase (NiR), generating nitric oxide. Could also have peroxidase and superoxide dismutase activities, detoxifying reactive oxygen species and protecting cells against oxidative stress. Also binds dioxygen with low affinity and could function as an oxygen sensor but has probably no function as a respiratory oxygen carrier. In Danio rerio (Zebrafish), this protein is Cytoglobin-1 (cygb1).